We begin with the raw amino-acid sequence, 795 residues long: Protein Jade-3 (795 aa).

A compositionally biased stretch (low complexity) spans 1–25 (MKRLRTPSSSDSSDNESPSTSFSSN). The interval 1–41 (MKRLRTPSSSDSSDNESPSTSFSSNKYGSKPGTPASAQKKP) is disordered. A PHD-type 1 zinc finger spans residues 201–251 (DVICDVCRSPDSEEGNDMVFCDKCNICVHQACYGIVKVPDGNWLCRTCVLG). The C2HC pre-PHD-type zinc finger occupies 253-287 (TPQCLLCPKTGGAMKATRAGTKWAHVSCALWIPEV). The PHD-type 2 zinc finger occupies 311–367 (LICSLCKLKTGACIQCSVKNCTIPFHVTCAFEHSLEMKTILDEGDEVKFKSYCLKHS). 3 disordered regions span residues 630 to 654 (HGQS…NGIL), 667 to 687 (AASE…SGFH), and 714 to 795 (FEKN…SVQR). Polar residues-rich tracts occupy residues 678-687 (SGKSQSSGFH) and 720-732 (KSSG…STER).

It belongs to the JADE family. In terms of assembly, component of the HBO1 complex.

Scaffold subunit of some HBO1 complexes, which have a histone H4 acetyltransferase activity. This Danio rerio (Zebrafish) protein is Protein Jade-3 (jade3).